We begin with the raw amino-acid sequence, 352 residues long: Phosphate acyltransferase (352 aa).

Over residues 328 to 339 (ESFPGDAREREG) the composition is skewed to basic and acidic residues. The disordered stretch occupies residues 328 to 352 (ESFPGDAREREGAQAPDAGTERVAS).

This sequence belongs to the PlsX family. As to quaternary structure, homodimer. Probably interacts with PlsY.

The protein localises to the cytoplasm. The enzyme catalyses a fatty acyl-[ACP] + phosphate = an acyl phosphate + holo-[ACP]. It functions in the pathway lipid metabolism; phospholipid metabolism. Catalyzes the reversible formation of acyl-phosphate (acyl-PO(4)) from acyl-[acyl-carrier-protein] (acyl-ACP). This enzyme utilizes acyl-ACP as fatty acyl donor, but not acyl-CoA. This Geobacter sp. (strain M21) protein is Phosphate acyltransferase.